Consider the following 342-residue polypeptide: Phenylalanine--tRNA ligase alpha subunit (342 aa).

E255 serves as a coordination point for Mg(2+).

This sequence belongs to the class-II aminoacyl-tRNA synthetase family. Phe-tRNA synthetase alpha subunit type 1 subfamily. In terms of assembly, tetramer of two alpha and two beta subunits. The cofactor is Mg(2+).

The protein localises to the cytoplasm. The catalysed reaction is tRNA(Phe) + L-phenylalanine + ATP = L-phenylalanyl-tRNA(Phe) + AMP + diphosphate + H(+). The protein is Phenylalanine--tRNA ligase alpha subunit of Pelotomaculum thermopropionicum (strain DSM 13744 / JCM 10971 / SI).